A 155-amino-acid chain; its full sequence is Ribonuclease H (155 aa).

Residues 1-143 (MNQVEIYTDG…ADALANRGVD (143 aa)) form the RNase H type-1 domain. The Mg(2+) site is built by Asp9, Glu47, Asp69, and Asp135.

This sequence belongs to the RNase H family. Monomer. Mg(2+) is required as a cofactor.

It localises to the cytoplasm. It catalyses the reaction Endonucleolytic cleavage to 5'-phosphomonoester.. Endonuclease that specifically degrades the RNA of RNA-DNA hybrids. This is Ribonuclease H from Verminephrobacter eiseniae (strain EF01-2).